We begin with the raw amino-acid sequence, 1072 residues long: MLGDGKEGTSTIPGFNQIQFEGFYRFIDQGLIEELSKFPKIEDIDHEIEFQLFVETYQLVEPLIKERDAVYESLTYSSELYVSAGLIWKTSRNMEEQRIFIGNIPLMNSLGTSIVNGIYRIVINQILQSPGIYYQSELDHNGISVYTGTIISDWGGRLELEIDKKARIWARVSRKQKISILVLSSAMGLNLREILENVCYPEIFLSFLTDKEKKKIGSKENAILEFYQQFSCVGGDPIFSESLCKELQKKFFHQRCELGRIGRRNINSRLNLNIPQNNIFLLPRDILAAADHLIGMKFGMGTLDDMNHLKNKRIRSVADLLQDQLGLALARLENVVKGTISGAIRHKLIPTPQNLVTSTPLTTTYESFFGLHPLSQVLDRTNPLTQIVHGRKLSYLGPGGLTGRTANFRIRDIHPSHYGRICPIDTSEGINVGLIGSLSIHARIGDWGSLESPFYELFEKSKKARIRMLFLSPSQDEYYMIAAGNSLALNRGIQEEQAVPARYRQEFLTIAWEEVHLRSIFPFQYFSIGASLIPFIEHNDANRALMSSNMQRQAVPLSRSEKCIVGTGLERQVALDSGVPAIAEHEGKILYTDTEKIVFSSNGDTLSIPLIMYQRSNKNTCMHQKPQVRRGKCIKKGQILADGAATVGGELALGKNILVAYMPWEGYNFEDAVLISECLVYGDIYTSFHIRKYEIQTHVTTQGPERITKEIPHLEGRLLRNLDKNGIVMLGSWVETGDILVGKLTPQVAKESSYAPEDRLLRAILGIQVSTSKETCLKLPIGGRGRVIDVRWVQKKGGSSYNPEIIRVYISQKREIKVGDKVAGRHGNKGIISKILPRQDMPYLQDGRPVDMVFNPLGVPSRMNVGQIFECSLGLAGSLLDRHYRIAPFDERYEQEASRKLVFSELYEASKQTANPWVFEPEYPGKSRIFDGRTGDPFEQPVIIGKPYILKLIHQVDDKIHGRSSGHYALVTQQPLRGRSKQGGQRVGEMEVWALEGFGVAHILQEMLTYKSDHIRARQEVLGTTIIGGTIPKPEDAPESFRLLVRELRSLALELNHFLVSEKNFQINRKEV.

It belongs to the RNA polymerase beta chain family. In plastids the minimal PEP RNA polymerase catalytic core is composed of four subunits: alpha, beta, beta', and beta''. When a (nuclear-encoded) sigma factor is associated with the core the holoenzyme is formed, which can initiate transcription.

It localises to the plastid. It is found in the chloroplast. The catalysed reaction is RNA(n) + a ribonucleoside 5'-triphosphate = RNA(n+1) + diphosphate. Functionally, DNA-dependent RNA polymerase catalyzes the transcription of DNA into RNA using the four ribonucleoside triphosphates as substrates. This is DNA-directed RNA polymerase subunit beta from Crucihimalaya wallichii (Rock-cress).